The chain runs to 227 residues: 7-cyano-7-deazaguanine synthase (227 aa).

Position 9-19 (9-19) interacts with ATP; the sequence is LSGGLDSATVL. Zn(2+) contacts are provided by Cys-189, Cys-199, Cys-202, and Cys-205.

It belongs to the QueC family. Zn(2+) serves as cofactor.

The enzyme catalyses 7-carboxy-7-deazaguanine + NH4(+) + ATP = 7-cyano-7-deazaguanine + ADP + phosphate + H2O + H(+). It participates in purine metabolism; 7-cyano-7-deazaguanine biosynthesis. Catalyzes the ATP-dependent conversion of 7-carboxy-7-deazaguanine (CDG) to 7-cyano-7-deazaguanine (preQ(0)). The polypeptide is 7-cyano-7-deazaguanine synthase (Cupriavidus taiwanensis (strain DSM 17343 / BCRC 17206 / CCUG 44338 / CIP 107171 / LMG 19424 / R1) (Ralstonia taiwanensis (strain LMG 19424))).